Consider the following 473-residue polypeptide: Ribosomal RNA small subunit methyltransferase F (473 aa).

Residues 124 to 130, glutamate 148, aspartate 175, and aspartate 193 contribute to the S-adenosyl-L-methionine site; that span reads ASAPGSK. Cysteine 246 functions as the Nucleophile in the catalytic mechanism.

It belongs to the class I-like SAM-binding methyltransferase superfamily. RsmB/NOP family.

The protein localises to the cytoplasm. It carries out the reaction cytidine(1407) in 16S rRNA + S-adenosyl-L-methionine = 5-methylcytidine(1407) in 16S rRNA + S-adenosyl-L-homocysteine + H(+). Its function is as follows. Specifically methylates the cytosine at position 1407 (m5C1407) of 16S rRNA. The sequence is that of Ribosomal RNA small subunit methyltransferase F from Aliivibrio salmonicida (strain LFI1238) (Vibrio salmonicida (strain LFI1238)).